The sequence spans 460 residues: Bifunctional protein GlmU (460 aa).

The segment at 1 to 229 (MSNYAIILAA…FEESLGVNDR (229 aa)) is pyrophosphorylase. Residues 8–11 (LAAG), K22, Q72, and 77–78 (GT) each bind UDP-N-acetyl-alpha-D-glucosamine. D102 is a Mg(2+) binding site. UDP-N-acetyl-alpha-D-glucosamine is bound by residues G139, E154, N169, and N227. Residue N227 participates in Mg(2+) binding. The interval 230–250 (VALATAEDVMRRRINKTHMIN) is linker. The N-acetyltransferase stretch occupies residues 251–460 (GVTFQNPNAT…KKPHHPSQQK (210 aa)). 2 residues coordinate UDP-N-acetyl-alpha-D-glucosamine: R332 and K350. The active-site Proton acceptor is the H362. Residues Y365 and N376 each coordinate UDP-N-acetyl-alpha-D-glucosamine. Residues A379, 385–386 (NY), S404, A422, and R439 each bind acetyl-CoA.

The protein in the N-terminal section; belongs to the N-acetylglucosamine-1-phosphate uridyltransferase family. It in the C-terminal section; belongs to the transferase hexapeptide repeat family. Homotrimer. Mg(2+) serves as cofactor.

It is found in the cytoplasm. It carries out the reaction alpha-D-glucosamine 1-phosphate + acetyl-CoA = N-acetyl-alpha-D-glucosamine 1-phosphate + CoA + H(+). The enzyme catalyses N-acetyl-alpha-D-glucosamine 1-phosphate + UTP + H(+) = UDP-N-acetyl-alpha-D-glucosamine + diphosphate. It participates in nucleotide-sugar biosynthesis; UDP-N-acetyl-alpha-D-glucosamine biosynthesis; N-acetyl-alpha-D-glucosamine 1-phosphate from alpha-D-glucosamine 6-phosphate (route II): step 2/2. It functions in the pathway nucleotide-sugar biosynthesis; UDP-N-acetyl-alpha-D-glucosamine biosynthesis; UDP-N-acetyl-alpha-D-glucosamine from N-acetyl-alpha-D-glucosamine 1-phosphate: step 1/1. The protein operates within bacterial outer membrane biogenesis; LPS lipid A biosynthesis. In terms of biological role, catalyzes the last two sequential reactions in the de novo biosynthetic pathway for UDP-N-acetylglucosamine (UDP-GlcNAc). The C-terminal domain catalyzes the transfer of acetyl group from acetyl coenzyme A to glucosamine-1-phosphate (GlcN-1-P) to produce N-acetylglucosamine-1-phosphate (GlcNAc-1-P), which is converted into UDP-GlcNAc by the transfer of uridine 5-monophosphate (from uridine 5-triphosphate), a reaction catalyzed by the N-terminal domain. This is Bifunctional protein GlmU from Streptococcus thermophilus (strain ATCC BAA-491 / LMD-9).